Consider the following 1140-residue polypeptide: Centrosomal protein of 135 kDa (1140 aa).

The interval 11–64 is homodimerization; sequence NIRKRLDQLGYRQTLTVECLPLVEKLFSDLVHTTESLRQSKLSAVKAEKESANF. 2 coiled-coil regions span residues 75–151 and 199–416; these read NARL…KNLH and LQVA…FAVT. Phosphoserine occurs at positions 383 and 439. Coiled coils occupy residues 447 to 644, 668 to 1036, and 1079 to 1113; these read LKGI…LENK, SLRI…LESL, and NTMLRAKVAQLQTDYDALKRQISTERYERERAIQE. S688 is subject to Phosphoserine. The interval 1114 to 1140 is disordered; it reads MRRHGLATPPLSSTLRSPSHSPEHRNV. At T1121 the chain carries Phosphothreonine. Low complexity predominate over residues 1121–1133; that stretch reads TPPLSSTLRSPSH. S1130 carries the post-translational modification Phosphoserine.

Belongs to the CEP135/TSGA10 family. In terms of assembly, homodimer. Interacts with DCTN2. Interacts with CEP250.

The protein localises to the cytoplasm. Its subcellular location is the cytoskeleton. The protein resides in the microtubule organizing center. It localises to the centrosome. It is found in the centriole. Functionally, centrosomal microtubule-binding protein involved in centriole biogenesis. Acts as a scaffolding protein during early centriole biogenesis. Required for the targeting of centriole satellite proteins to centrosomes such as of PCM1, SSX2IP and CEP290 and recruitment of WRAP73 to centrioles. Also required for centriole-centriole cohesion during interphase by acting as a platform protein for CEP250 at the centriole. Required for the recruitment of CEP295 to the proximal end of new-born centrioles at the centriolar microtubule wall during early S phase in a PLK4-dependent manner. The protein is Centrosomal protein of 135 kDa of Homo sapiens (Human).